Here is a 555-residue protein sequence, read N- to C-terminus: Urocanate hydratase (555 aa).

Residues 51 to 52 (GG), Q129, 175 to 177 (GMG), E195, 262 to 266 (QTSAH), 272 to 273 (YL), and Y321 each bind NAD(+). Residue C409 is part of the active site. Residue G491 participates in NAD(+) binding.

It belongs to the urocanase family. NAD(+) is required as a cofactor.

It is found in the cytoplasm. The enzyme catalyses 4-imidazolone-5-propanoate = trans-urocanate + H2O. It participates in amino-acid degradation; L-histidine degradation into L-glutamate; N-formimidoyl-L-glutamate from L-histidine: step 2/3. Functionally, catalyzes the conversion of urocanate to 4-imidazolone-5-propionate. This Xanthomonas axonopodis pv. citri (strain 306) protein is Urocanate hydratase.